The sequence spans 932 residues: Phosphoenolpyruvate carboxylase (932 aa).

Catalysis depends on residues H164 and K594.

The protein belongs to the PEPCase type 1 family. Mg(2+) is required as a cofactor.

It catalyses the reaction oxaloacetate + phosphate = phosphoenolpyruvate + hydrogencarbonate. Functionally, forms oxaloacetate, a four-carbon dicarboxylic acid source for the tricarboxylic acid cycle. The chain is Phosphoenolpyruvate carboxylase from Bradyrhizobium diazoefficiens (strain JCM 10833 / BCRC 13528 / IAM 13628 / NBRC 14792 / USDA 110).